The following is a 405-amino-acid chain: Acetate kinase (405 aa).

N7 is a Mg(2+) binding site. An ATP-binding site is contributed by K14. R99 is a binding site for substrate. D156 serves as the catalytic Proton donor/acceptor. 215-219 contributes to the ATP binding site; the sequence is HLGNG. Residue E391 coordinates Mg(2+).

This sequence belongs to the acetokinase family. Homodimer. The cofactor is Mg(2+). It depends on Mn(2+) as a cofactor.

It localises to the cytoplasm. It catalyses the reaction acetate + ATP = acetyl phosphate + ADP. Its pathway is metabolic intermediate biosynthesis; acetyl-CoA biosynthesis; acetyl-CoA from acetate: step 1/2. In terms of biological role, catalyzes the formation of acetyl phosphate from acetate and ATP. Can also catalyze the reverse reaction. The sequence is that of Acetate kinase from Trichormus variabilis (strain ATCC 29413 / PCC 7937) (Anabaena variabilis).